The chain runs to 94 residues: Protein RnfH (94 aa).

The protein belongs to the UPF0125 (RnfH) family.

In Yersinia pestis bv. Antiqua (strain Antiqua), this protein is Protein RnfH.